The primary structure comprises 909 residues: Alanine--tRNA ligase (909 aa).

The Zn(2+) site is built by His600, His604, Cys704, and His708.

It belongs to the class-II aminoacyl-tRNA synthetase family. Zn(2+) is required as a cofactor.

It localises to the cytoplasm. It catalyses the reaction tRNA(Ala) + L-alanine + ATP = L-alanyl-tRNA(Ala) + AMP + diphosphate. Its function is as follows. Catalyzes the attachment of alanine to tRNA(Ala) in a two-step reaction: alanine is first activated by ATP to form Ala-AMP and then transferred to the acceptor end of tRNA(Ala). Also edits incorrectly charged Ser-tRNA(Ala) and Gly-tRNA(Ala) via its editing domain. This Staphylothermus marinus (strain ATCC 43588 / DSM 3639 / JCM 9404 / F1) protein is Alanine--tRNA ligase.